We begin with the raw amino-acid sequence, 1475 residues long: Protein STU1 (1475 aa).

2 disordered regions span residues 870 to 913 (REST…EPDL) and 1113 to 1134 (DGES…NRPA). The segment covering 887-896 (DGAHGGDARD) has biased composition (basic and acidic residues).

Belongs to the CLASP family. In terms of assembly, interacts with microtubules.

The protein resides in the cytoplasm. It is found in the cytoskeleton. The protein localises to the nucleus. Its subcellular location is the spindle. In terms of biological role, microtubule binding protein that promotes the stabilization of dynamic microtubules. Required for mitotic spindle formation. The protein is Protein STU1 (STU1) of Eremothecium gossypii (strain ATCC 10895 / CBS 109.51 / FGSC 9923 / NRRL Y-1056) (Yeast).